Consider the following 222-residue polypeptide: Zinc finger C2HC domain-containing protein 1B (222 aa).

The C2HC/C3H-type 1 zinc-finger motif lies at 14–43 (ELFPCEVCGRRFAADVLERHGPICKKLFNR). The Zn(2+) site is built by C18, C21, H33, and C37. Residues 48 to 78 (FSSLKQRLQGTDIPTVKKTPQSKSPPVRKSN) form a disordered region. The C2HC/C3H-type 2; degenerate zinc finger occupies 117 to 146 (DYIQRPYCMRRFNESAAERHTNFCKDQSSR). The segment at 196-222 (PTKSGLAMDPASGAKLRQGFSKSSKKD) is disordered.

This sequence belongs to the ZC2HC1 family. The cofactor is Zn(2+).

The sequence is that of Zinc finger C2HC domain-containing protein 1B (ZC2HC1B) from Homo sapiens (Human).